We begin with the raw amino-acid sequence, 335 residues long: Probable tRNA N6-adenosine threonylcarbamoyltransferase (335 aa).

A divalent metal cation-binding residues include His109, His113, and Tyr130. Substrate is bound by residues 130 to 134 (YVSGG), Asp162, Gly177, Glu181, and Asn266. Asp294 is an a divalent metal cation binding site.

It belongs to the KAE1 / TsaD family. In terms of assembly, component of the EKC/KEOPS complex; the whole complex dimerizes. It depends on a divalent metal cation as a cofactor.

The protein resides in the cytoplasm. Its subcellular location is the nucleus. It catalyses the reaction L-threonylcarbamoyladenylate + adenosine(37) in tRNA = N(6)-L-threonylcarbamoyladenosine(37) in tRNA + AMP + H(+). Functionally, component of the EKC/KEOPS complex that is required for the formation of a threonylcarbamoyl group on adenosine at position 37 (t(6)A37) in tRNAs that read codons beginning with adenine. The complex is probably involved in the transfer of the threonylcarbamoyl moiety of threonylcarbamoyl-AMP (TC-AMP) to the N6 group of A37. Osgep likely plays a direct catalytic role in this reaction, but requires other protein(s) of the complex to fulfill this activity. In Nematostella vectensis (Starlet sea anemone), this protein is Probable tRNA N6-adenosine threonylcarbamoyltransferase.